A 139-amino-acid polypeptide reads, in one-letter code: Large ribosomal subunit protein uL16 (139 aa).

Basic residues predominate over residues 1-21 (MLSPRKTKFRKQHRGRMRGKA). Positions 1 to 23 (MLSPRKTKFRKQHRGRMRGKATR) are disordered.

It belongs to the universal ribosomal protein uL16 family. In terms of assembly, part of the 50S ribosomal subunit.

Binds 23S rRNA and is also seen to make contacts with the A and possibly P site tRNAs. This Acaryochloris marina (strain MBIC 11017) protein is Large ribosomal subunit protein uL16.